We begin with the raw amino-acid sequence, 368 residues long: CST complex subunit STN1 (368 aa).

The interval 1–185 (MQPGSSRCEE…KVYDQPFHSS (185 aa)) is interaction with CTC1. The segment at residues 57–155 (VDVLGTVIGV…EIHATTYYKV (99 aa)) is a DNA-binding region (OB). Winged helix-turn-helix (wHTH) regions lie at residues 191-295 (EALS…YVTR) and 296-368 (EDKD…YTAF).

Belongs to the STN1 family. As to quaternary structure, component of the CST complex, composed of TEN1/C17orf106, CTC1/C17orf68 and STN1; in the complex interacts directly with TEN1 and CTC1. Interacts with ACD/TPP1, POT1 and POLA1.

It is found in the nucleus. Its subcellular location is the chromosome. It localises to the telomere. Component of the CST complex proposed to act as a specialized replication factor promoting DNA replication under conditions of replication stress or natural replication barriers such as the telomere duplex. The CST complex binds single-stranded DNA with high affinity in a sequence-independent manner, while isolated subunits bind DNA with low affinity by themselves. Initially the CST complex has been proposed to protect telomeres from DNA degradation. However, the CST complex has been shown to be involved in several aspects of telomere replication. The CST complex inhibits telomerase and is involved in telomere length homeostasis; it is proposed to bind to newly telomerase-synthesized 3' overhangs and to terminate telomerase action implicating the association with the ACD:POT1 complex thus interfering with its telomerase stimulation activity. The CST complex is also proposed to be involved in fill-in synthesis of the telomeric C-strand probably implicating recruitment and activation of DNA polymerase alpha. The CST complex facilitates recovery from many forms of exogenous DNA damage; seems to be involved in the re-initiation of DNA replication at repaired forks and/or dormant origins. Required for efficicient replication of the duplex region of the telomere. Promotes efficient replication of lagging-strand telomeres. Promotes general replication start following replication-fork stalling implicating new origin firing. May be in involved in C-strand fill-in during late S/G2 phase independent of its role in telomere duplex replication. Functionally, component of the CST complex, a complex that binds to single-stranded DNA and is required to protect telomeres from DNA degradation. The CST complex binds single-stranded DNA with high affinity in a sequence-independent manner, while isolated subunits bind DNA with low affinity by themselves. In addition to telomere protection, the CST complex has probably a more general role in DNA metabolism at non-telomeric sites. The polypeptide is CST complex subunit STN1 (Homo sapiens (Human)).